The sequence spans 153 residues: Aspartate carbamoyltransferase regulatory chain (153 aa).

4 residues coordinate Zn(2+): C109, C114, C138, and C141.

Belongs to the PyrI family. As to quaternary structure, contains catalytic and regulatory chains. Zn(2+) is required as a cofactor.

Involved in allosteric regulation of aspartate carbamoyltransferase. This chain is Aspartate carbamoyltransferase regulatory chain, found in Cenarchaeum symbiosum (strain A).